The sequence spans 73 residues: uncharacterized protein (73 aa).

This is an uncharacterized protein from Autographa californica nuclear polyhedrosis virus (AcMNPV).